A 430-amino-acid chain; its full sequence is tRNA(Ile)-lysidine synthase (430 aa).

Residue 21–26 (SGGLDS) participates in ATP binding.

This sequence belongs to the tRNA(Ile)-lysidine synthase family.

The protein resides in the cytoplasm. It catalyses the reaction cytidine(34) in tRNA(Ile2) + L-lysine + ATP = lysidine(34) in tRNA(Ile2) + AMP + diphosphate + H(+). Ligates lysine onto the cytidine present at position 34 of the AUA codon-specific tRNA(Ile) that contains the anticodon CAU, in an ATP-dependent manner. Cytidine is converted to lysidine, thus changing the amino acid specificity of the tRNA from methionine to isoleucine. In Salmonella paratyphi A (strain ATCC 9150 / SARB42), this protein is tRNA(Ile)-lysidine synthase.